The primary structure comprises 401 residues: MAGATVTVEEVRKAQRATGPATVLAIGTATPANCVHQADYPDYYFRITKSEHMTELKEKFKRMCDKSQIRKRYMHLTEEYLAENPNMCAYMAPSLDARQDIVVVEVPKLGKAAAQKAIKEWGQPKSKITHLVFCTTSGVDMPGADYQLTKMLGLRPSVNRLMMYQQGCFAGGTVLRVAKDLAENNRGARVLVVCSEITAVTFRGPSESHLDSMVGQALFGDGAAAVIVGADPDERVERPLFQLVSASQTILPDSEGAIDGHLREVGLTFHLLKDVPGLISKNIERSLEEAFKPLGITDYNSIFWVAHPGGPAILDQVEAKVGLEKERMRATRHVLSEYGNMSSACVLFILDEMRKRSAEDGRATTGEGFEWGVLFGFGPGLTVETVVLHSVPITTGAAITA.

Cysteine 168 is a catalytic residue.

The protein belongs to the thiolase-like superfamily. Chalcone/stilbene synthases family.

It carries out the reaction (E)-4-coumaroyl-CoA + 3 malonyl-CoA + 3 H(+) = 2',4,4',6'-tetrahydroxychalcone + 3 CO2 + 4 CoA. The protein operates within secondary metabolite biosynthesis; flavonoid biosynthesis. In terms of biological role, the primary product of this enzyme is 4,2',4',6'-tetrahydroxychalcone (also termed naringenin-chalcone or chalcone) which can under specific conditions spontaneously isomerize into naringenin. The chain is Chalcone synthase 2 (CHS2) from Sorghum bicolor (Sorghum).